The following is a 225-amino-acid chain: Protein YIP4 (225 aa).

Residues Ser-27 and Ser-28 each carry the phosphoserine modification. 5 consecutive transmembrane segments (helical) span residues 91 to 111 (WDLW…ALST), 118 to 138 (SVFT…SLNI), 154 to 176 (LGYS…LIFI), 180 to 199 (VIVA…LQNS), and 205 to 225 (KLLA…IIFL).

The protein belongs to the YIP1 family. In terms of assembly, interacts with the YIP1 family members yip1 and yip5, and with several Rab GTPases.

It is found in the membrane. Functionally, may be involved in proper membrane localization of Rab GTPases. This is Protein YIP4 from Schizosaccharomyces pombe (strain 972 / ATCC 24843) (Fission yeast).